The primary structure comprises 231 residues: MTRASLDKQPHEVASMFDDVAERYDLTNDLLSLGQDRVWRREVAKAVDARPAQKILDLAAGTATSSLPFARAGAYVVPCDFSLGMLRVGKKNHPWLPLTAGDATKLPFKDDTFDAVTISFGLRNVQDTDTALSELYRVTKPGGRVVICEFSHPTWAPFRTVYTEYLMRALPPVARAVSSNPDAYVYLAESIRAWPTQPELAERLRKAGWSKVAWRNLTGGVVALHRGFKAV.

Residues threonine 62, aspartate 80, aspartate 102–alanine 103, and serine 119 contribute to the S-adenosyl-L-methionine site.

This sequence belongs to the class I-like SAM-binding methyltransferase superfamily. MenG/UbiE family.

The enzyme catalyses a 2-demethylmenaquinol + S-adenosyl-L-methionine = a menaquinol + S-adenosyl-L-homocysteine + H(+). The protein operates within quinol/quinone metabolism; menaquinone biosynthesis; menaquinol from 1,4-dihydroxy-2-naphthoate: step 2/2. Its function is as follows. Methyltransferase required for the conversion of demethylmenaquinol (DMKH2) to menaquinol (MKH2). This Streptomyces avermitilis (strain ATCC 31267 / DSM 46492 / JCM 5070 / NBRC 14893 / NCIMB 12804 / NRRL 8165 / MA-4680) protein is Demethylmenaquinone methyltransferase.